The chain runs to 254 residues: Protein odd-skipped-related 2 (254 aa).

3 consecutive C2H2-type zinc fingers follow at residues 124 to 146 (FICKYCDRHFTKSYNLLIHERTH), 152 to 174 (YSCDVCGKAFRRQDHLRDHKYIH), and 180 to 202 (FKCEICGKGFCQSRTLLVHRATH).

The protein belongs to the Odd C2H2-type zinc-finger protein family.

It is found in the nucleus. May function as transcription regulator. Required for morphogenesis and function of the digestive tract. This is Protein odd-skipped-related 2 from Caenorhabditis elegans.